Reading from the N-terminus, the 263-residue chain is Hatching enzyme 1.2 (263 aa).

An N-terminal signal peptide occupies residues 1-19 (MDIRASLSILLLLFGLSQA). The propeptide at 20–64 (SPLREFEAIFVSEPETVDITTQILETNKGSSEVLFEGDVVLPKNR) is activation peptide. The 199-residue stretch at 65–263 (NALICEDKSC…ILRINKLYGC (199 aa)) folds into the Peptidase M12A domain. Cystine bridges form between Cys69–Cys74, Cys114–Cys263, and Cys135–Cys155. Position 163 (His163) interacts with Zn(2+). Glu164 is an active-site residue. Zn(2+) is bound by residues His167 and His173.

The cofactor is Zn(2+). In terms of tissue distribution, expressed in cells of the hatching gland.

The protein resides in the secreted. The catalysed reaction is Hydrolysis of the inner layer of fish egg envelope. Also hydrolysis of casein and small molecule substrates such as succinyl-Leu-Leu-Val-Tyr-|-7-(4-methyl)coumarylamide.. Its function is as follows. Metalloendopeptidase which participates in the breakdown of the egg envelope at the time of hatching. Cleaves the N-terminal regions of the zona pellucia glycoproteins ZP2 and ZP3, where it specifically recognizes the peptide sequences TVQQS-|-DYLIK (major site) and KLMLK-|-APEPF (minor site). The protein is Hatching enzyme 1.2 of Danio rerio (Zebrafish).